The primary structure comprises 367 residues: Adenosine deaminase (367 aa).

Residues histidine 46 and histidine 48 each coordinate Zn(2+). A purine D-ribonucleoside contacts are provided by residues 48 to 50, aspartate 176, and glycine 205; that span reads HLD. The interval 174–188 is gating helix loop; regulates binding affinity for substrates and thus substrate selectivity; the sequence is TGDGGLSHERMKEAA. Residue histidine 230 participates in Zn(2+) binding. A purine D-ribonucleoside contacts are provided by glutamate 233, histidine 257, and aspartate 314. Aspartate 314 contacts Zn(2+).

This sequence belongs to the metallo-dependent hydrolases superfamily. Adenosine and AMP deaminases family. Zn(2+) is required as a cofactor.

It catalyses the reaction adenosine + H2O + H(+) = inosine + NH4(+). It carries out the reaction S-methyl-5'-thioadenosine + H2O + H(+) = S-methyl-5'-thioinosine + NH4(+). The protein operates within purine metabolism; purine nucleoside salvage. Its activity is regulated as follows. Inhibited by coformycin and methylthiocoformycin (MT-coformycin). Catalyzes the hydrolytic deamination of adenosine to produce inosine. Unlike mammalian adenosine deaminases, also catalyzes the deamination of 5'-methylthioadenosine (MTA), a by-product of polyamine biosynthesis, to produce 5'-methylthioinosine (MTI). Plays an essential role in the purine salvage pathway which allows the parasite to use host cell purines for the synthesis of nucleic acids. This Plasmodium falciparum (isolate 3D7) protein is Adenosine deaminase.